We begin with the raw amino-acid sequence, 682 residues long: Potassium-transporting ATPase ATP-binding subunit (682 aa).

Helical transmembrane passes span 34–54 (PVMFIVWIGSLLTTCISIAMA), 62–82 (ALFSAAISGWLWVTVLFANFA), 219–239 (IALTILLIALTIVFLLATATL), and 254–274 (VLVALLVCLIPTTIGGLLSAI). Catalysis depends on aspartate 307, which acts as the 4-aspartylphosphate intermediate. ATP is bound by residues aspartate 344, glutamate 348, 377-384 (FTAQSRMS), and lysine 395. Positions 518 and 522 each coordinate Mg(2+). 3 consecutive transmembrane segments (helical) span residues 588 to 608 (FAIIPAAFAATYPQLNALNIM), 616 to 636 (AILSAVIFNALIIVFLIPLAL), and 656 to 676 (IYGLGGLLVPFIGIKVIDLLL).

It belongs to the cation transport ATPase (P-type) (TC 3.A.3) family. Type IA subfamily. The system is composed of three essential subunits: KdpA, KdpB and KdpC.

The protein localises to the cell inner membrane. The enzyme catalyses K(+)(out) + ATP + H2O = K(+)(in) + ADP + phosphate + H(+). In terms of biological role, part of the high-affinity ATP-driven potassium transport (or Kdp) system, which catalyzes the hydrolysis of ATP coupled with the electrogenic transport of potassium into the cytoplasm. This subunit is responsible for energy coupling to the transport system and for the release of the potassium ions to the cytoplasm. The chain is Potassium-transporting ATPase ATP-binding subunit from Shigella boydii serotype 18 (strain CDC 3083-94 / BS512).